A 271-amino-acid polypeptide reads, in one-letter code: MRLYRDTAVVLRLHKLGEADHIVTLLTRQFGLVRAVAKGVRRTTSKFGARLEPFAHIDVQLLPGKNLDIITQVQTVDAFATDIVDDYSRYTTACAVLETAERLAGEERAPAPQLQRLTVGALRAIAEQARPVEFVLDAFLLRAMGYAGWAPALEECARCSAPGPHRAFHVAAGGAVCTYCRPAGAATPSPGVLDLMEALLRGEWEGTDSAPATLRTQASGLVAAHLQWHLERQLRTLPLIERSRPHAAVEVDLSVRQDGTRDSTTRTANSA.

It belongs to the RecO family.

Its function is as follows. Involved in DNA repair and RecF pathway recombination. In Rhodococcus erythropolis (strain PR4 / NBRC 100887), this protein is DNA repair protein RecO.